A 2453-amino-acid chain; its full sequence is Nuclear receptor corepressor 1 (2453 aa).

Polar residues predominate over residues 1-29 (MSSSGYPPNQGAFSTEQSRYPSHSVQYTF). 3 disordered regions span residues 1–116 (MSSS…QVSD), 147–177 (PAFG…SKLS), and 206–231 (QQQL…VEQK). Residues 1–373 (MSSSGYPPNQ…QRGAGLSATI (373 aa)) are interaction with ZBTB33 and HEXIM1. Over residues 51–64 (SQASQLLQQQQQQQ) the composition is skewed to low complexity. Basic and acidic residues-rich tracts occupy residues 77-88 (PGSDRPQERRSG) and 99-116 (VDHD…QVSD). Ser172 carries the post-translational modification Phosphoserine. Residues 174-216 (SKLSKEELIQSMDRVDREIAKVEQQILKLKKKQQQLEEEAAKP) are a coiled coil. Basic and acidic residues predominate over residues 212–221 (EAAKPPEPEK). A Phosphoserine modification is found at Ser224. Residues 254–312 (FEGLGPKVELPLYNQPSDTKVYHENIKTNQVMRKKLILFFKRRNHARKQREQKICQRYD) form an interaction with SIN3A/B region. The stretch at 299–328 (ARKQREQKICQRYDQLMEAWEKKVDRIENN) forms a coiled coil. The 52-residue stretch at 435-486 (QFMNVWTDHEKEIFKDKFIQHPKNFGLIASYLERKSVPDCVLYYYLTKKNEN) folds into the SANT 1 domain. Disordered regions lie at residues 497–631 (KRRG…TEEE) and 677–908 (LLQQ…PERQ). The stretch at 501 to 550 (RNQQIARPSQEEKVEEKEEDKAEKTEKKEEEKKDDEEKDDKEDSKETTKE) forms a coiled coil. Basic and acidic residues-rich tracts occupy residues 509-531 (SQEE…KEEE) and 541-556 (KEDS…RTEA). Over residues 592–604 (EAAAANAAAAATE) the composition is skewed to low complexity. A compositionally biased stretch (pro residues) spans 605–616 (EPPPPLPPPPEP). The region spanning 622-673 (VETSRWTEEEMEVAKKGLVEHGRNWAAIAKMVGTKSEAQCKNFYFNYKRRHN) is the SANT 2 domain. The segment covering 697-707 (QCESVASTVSA) has biased composition (polar residues). Residues 708 to 727 (QEDEDIEASNEEENPEDSEG) show a composition bias toward acidic residues. Residues 771 to 787 (TTDPAPCASPSSAVPTT) show a composition bias toward low complexity. The span at 851-885 (GEGDAKERDLESTSEKTEARDEDVVVAEQIERPEP) shows a compositional bias: basic and acidic residues. Ser1011 carries the post-translational modification Phosphoserine. The segment at 1034-1058 (VRLPTTRPTRPPPPLIPSSKTTVAS) is disordered. A Glycyl lysine isopeptide (Lys-Gly) (interchain with G-Cter in SUMO1); alternate cross-link involves residue Lys1117. A Glycyl lysine isopeptide (Lys-Gly) (interchain with G-Cter in SUMO2); alternate cross-link involves residue Lys1117. Ser1122 carries the post-translational modification Phosphoserine. Lys1195 is covalently cross-linked (Glycyl lysine isopeptide (Lys-Gly) (interchain with G-Cter in SUMO2)). Ser1206, Ser1207, Ser1274, Ser1292, and Ser1333 each carry phosphoserine. N6-acetyllysine is present on Lys1347. Thr1378 is modified (phosphothreonine). Lys1400 participates in a covalent cross-link: Glycyl lysine isopeptide (Lys-Gly) (interchain with G-Cter in SUMO2). Residue Lys1423 forms a Glycyl lysine isopeptide (Lys-Gly) (interchain with G-Cter in SUMO2); alternate linkage. Lys1423 carries the N6-acetyllysine; alternate modification. Positions 1450 to 1544 (GEPVRARHTS…SIPAKSPVPG (95 aa)) are disordered. Ser1459 and Ser1481 each carry phosphoserine. A compositionally biased stretch (polar residues) spans 1459–1469 (SVVSSGPSVLR). A compositionally biased stretch (polar residues) spans 1495 to 1514 (VSYQNTISRGSPMMNRTSDV). The tract at residues 1510-2453 (RTSDVSSSKS…QYETLSDSDD (944 aa)) is interaction with C1D. Lys1525 is covalently cross-linked (Glycyl lysine isopeptide (Lys-Gly) (interchain with G-Cter in SUMO2)). At Ser1598 the chain carries Phosphoserine. Disordered regions lie at residues 1697 to 1780 (RPYN…VRTQ) and 1902 to 1939 (ALPS…RTRG). Composition is skewed to basic and acidic residues over residues 1718-1745 (AERE…RERI) and 1919-1937 (AGKD…ELRT). The CORNR box 1 motif lies at 1949-1953 (IDVII). The disordered stretch occupies residues 1959-2060 (SDKDARERGS…SSQSEGMGQV (102 aa)). The segment covering 1968-1979 (SQSSDSSSSLSS) has biased composition (low complexity). 2 positions are modified to phosphoserine: Ser1993 and Ser1997. Positions 2050–2129 (PSSQSEGMGQ…QSQTVLHPRP (80 aa)) are ID1. The tract at residues 2065 to 2068 (RLIT) is required for interaction with RARA in the absence of its ligand. The short motif at 2073 to 2077 (ICQII) is the CORNR box 2 element. Residues 2088–2124 (SQASTSTFQTSPSALSSTPVRTKTSSRYSPESQSQTV) are compositionally biased toward polar residues. The disordered stretch occupies residues 2088–2174 (SQASTSTFQT…SPPQGPAVHE (87 aa)). Ser2116, Ser2134, Ser2150, Ser2165, and Ser2198 each carry phosphoserine. Over residues 2138-2156 (LVDKSRGSRPGKSPERSHI) the composition is skewed to basic and acidic residues. An ID2 region spans residues 2226–2287 (IFRKLNSSGG…EDIIRKALMG (62 aa)). The short motif at 2277 to 2281 (LEDII) is the CORNR box 3 element. The segment at 2303 to 2396 (PVGIMPGSAS…RPSSTGSTQF (94 aa)) is disordered. Over residues 2310-2319 (SASTSVVTSS) the composition is skewed to low complexity. A Phosphothreonine modification is found at Thr2412. Residues Ser2449 and Ser2451 each carry the phosphoserine modification.

It belongs to the N-CoR nuclear receptor corepressors family. Forms a large corepressor complex that contains SIN3A/B and histone deacetylases HDAC1 and HDAC2. This complex associates with the thyroid receptor (TR) and the retinoid acid receptor (RAR) in the absence of ligand. Interacts directly with RARA; the interaction is facilitated with RARA trimethylation. Component of the N-Cor repressor complex, at least composed of CBFA2T3, HEXIM1, NCOR1, NCOR2, HDAC3, TBL1X, TBL1XR1, CORO2A and GPS2. Interacts with ZBTB33; the interaction serves to recruit the N-CoR complex to promoter regions containing methylated CpG dinucleotides. Interacts with TRIM28 and KDM3A. Interacts (via the RD1 domain) with BAZ1A (via its N-terminal); the interaction corepresses a number of NCOR1-regulated genes. Interacts with BCL6, C1D, DACH1, HEXIM1, HDAC7, RORA, RORC, SAP30, SIAH2, SIN3A and SIN3B. May interact with DEAF1. Interacts with RXRA. Interacts with SETD5. Interacts with VDR. Interacts with ZBTB7A. Interacts with AR. Interacts with HDAC3. Post-translationally, ubiquitinated; mediated by SIAH2 and leading to its subsequent proteasomal degradation. In terms of tissue distribution, ubiquitous.

It is found in the nucleus. Mediates transcriptional repression by certain nuclear receptors. Part of a complex which promotes histone deacetylation and the formation of repressive chromatin structures which may impede the access of basal transcription factors. Participates in the transcriptional repressor activity produced by BCL6. Recruited by ZBTB7A to the androgen response elements/ARE on target genes, negatively regulates androgen receptor signaling and androgen-induced cell proliferation. Mediates the NR1D1-dependent repression and circadian regulation of TSHB expression. The NCOR1-HDAC3 complex regulates the circadian expression of the core clock gene ARTNL/BMAL1 and the genes involved in lipid metabolism in the liver. This chain is Nuclear receptor corepressor 1 (Ncor1), found in Mus musculus (Mouse).